A 238-amino-acid polypeptide reads, in one-letter code: Glycerol uptake facilitator protein 4 (238 aa).

The next 2 membrane-spanning stretches (helical) occupy residues 2–22 (IHQL…GVGV) and 39–59 (IFAI…FGNV). Residues 62 to 64 (NPA) carry the NPA 1 motif. Helical transmembrane passes span 80-100 (FIPY…IVWI), 135-155 (FFVE…ISEV), and 158-178 (PGIV…GLGG). An NPA 2 motif is present at residues 185–187 (NLA). A helical transmembrane segment spans residues 211-231 (YGIIVPGIAPFVGAACAALFM).

Belongs to the MIP/aquaporin (TC 1.A.8) family.

The protein localises to the cell membrane. Its function is as follows. Transporter that facilitates the transmembrane diffusion of water, dihydroxyacetone, glycerol, urea, H(2)O(2) and D/L-lactic acid. Is involved in the cellular racemization of lactate and lactate metabolism, but has likely a more general physiological role. The transported molecule is indeed lactic acid and not the lactate anion, in agreement with the assumption that, with very few exceptions, MIPs (major intrinsic proteins) only facilitate the transport of uncharged solutes. The protein is Glycerol uptake facilitator protein 4 of Lactiplantibacillus plantarum (strain ATCC BAA-793 / NCIMB 8826 / WCFS1) (Lactobacillus plantarum).